Here is a 352-residue protein sequence, read N- to C-terminus: 4-hydroxy-3-methylbut-2-en-1-yl diphosphate synthase (flavodoxin) (352 aa).

4 residues coordinate [4Fe-4S] cluster: Cys-263, Cys-266, Cys-298, and Glu-305.

This sequence belongs to the IspG family. It depends on [4Fe-4S] cluster as a cofactor.

The catalysed reaction is (2E)-4-hydroxy-3-methylbut-2-enyl diphosphate + oxidized [flavodoxin] + H2O + 2 H(+) = 2-C-methyl-D-erythritol 2,4-cyclic diphosphate + reduced [flavodoxin]. Its pathway is isoprenoid biosynthesis; isopentenyl diphosphate biosynthesis via DXP pathway; isopentenyl diphosphate from 1-deoxy-D-xylulose 5-phosphate: step 5/6. In terms of biological role, converts 2C-methyl-D-erythritol 2,4-cyclodiphosphate (ME-2,4cPP) into 1-hydroxy-2-methyl-2-(E)-butenyl 4-diphosphate. This Sulfurimonas denitrificans (strain ATCC 33889 / DSM 1251) (Thiomicrospira denitrificans (strain ATCC 33889 / DSM 1251)) protein is 4-hydroxy-3-methylbut-2-en-1-yl diphosphate synthase (flavodoxin).